Reading from the N-terminus, the 792-residue chain is Phenylalanine--tRNA ligase beta subunit (792 aa).

The tRNA-binding domain maps to 39–147 (AAAFSGVVVG…DNAPIGQDIR (109 aa)). Residues 400–475 (PERPAVRLRP…RLHGYDAIPA (76 aa)) form the B5 domain. Mg(2+) is bound by residues D453, D459, E462, and E463. Residues 698–791 (SRQPAVTRDV…TETSLGARLR (94 aa)) form the FDX-ACB domain.

The protein belongs to the phenylalanyl-tRNA synthetase beta subunit family. Type 1 subfamily. In terms of assembly, tetramer of two alpha and two beta subunits. Requires Mg(2+) as cofactor.

The protein resides in the cytoplasm. The catalysed reaction is tRNA(Phe) + L-phenylalanine + ATP = L-phenylalanyl-tRNA(Phe) + AMP + diphosphate + H(+). The protein is Phenylalanine--tRNA ligase beta subunit of Aromatoleum aromaticum (strain DSM 19018 / LMG 30748 / EbN1) (Azoarcus sp. (strain EbN1)).